The primary structure comprises 238 residues: Probable transcriptional regulatory protein CHU_3516 (238 aa).

This sequence belongs to the TACO1 family.

Its subcellular location is the cytoplasm. The chain is Probable transcriptional regulatory protein CHU_3516 from Cytophaga hutchinsonii (strain ATCC 33406 / DSM 1761 / CIP 103989 / NBRC 15051 / NCIMB 9469 / D465).